Here is a 352-residue protein sequence, read N- to C-terminus: Ribosomal RNA large subunit methyltransferase M (352 aa).

Residues S184, 217–220, D236, D256, and D272 each bind S-adenosyl-L-methionine; that span reads APGG. The Proton acceptor role is filled by K301.

Belongs to the class I-like SAM-binding methyltransferase superfamily. RNA methyltransferase RlmE family. RlmM subfamily. In terms of assembly, monomer.

Its subcellular location is the cytoplasm. It catalyses the reaction cytidine(2498) in 23S rRNA + S-adenosyl-L-methionine = 2'-O-methylcytidine(2498) in 23S rRNA + S-adenosyl-L-homocysteine + H(+). Catalyzes the 2'-O-methylation at nucleotide C2498 in 23S rRNA. This Pseudomonas aeruginosa (strain UCBPP-PA14) protein is Ribosomal RNA large subunit methyltransferase M.